The following is a 169-amino-acid chain: Flagellar biosynthetic protein FliU (169 aa).

It belongs to the FliB family.

Required for the secretion of flagellin and expression of motility. The protein is Flagellar biosynthetic protein FliU (fliU) of Salmonella muenchen.